The following is a 143-amino-acid chain: Adrenodoxin, mitochondrial (143 aa).

The N-terminal 19 residues, 1–19 (CSAVAVRTLRPLSLSARAA), are a transit peptide targeting the mitochondrion. The region spanning 26 to 130 (ITVHFINRDG…NMTVRVPEAV (105 aa)) is the 2Fe-2S ferredoxin-type domain. [2Fe-2S] cluster-binding residues include Cys-65, Cys-71, Cys-74, and Cys-111.

It belongs to the adrenodoxin/putidaredoxin family. The cofactor is [2Fe-2S] cluster.

It is found in the mitochondrion matrix. Its function is as follows. Essential for the synthesis of various steroid hormones. Participates in the reduction of mitochondrial cytochrome P450 for steroidogenesis. Transfers electrons from adrenodoxin reductase to CYP11A1, a cytochrome P450 that catalyzes cholesterol side-chain cleavage. Does not form a ternary complex with adrenodoxin reductase and CYP11A1 but shuttles between the two enzymes to transfer electrons. The polypeptide is Adrenodoxin, mitochondrial (FDX1) (Gallus gallus (Chicken)).